Consider the following 852-residue polypeptide: Chitin synthase 1 (852 aa).

Disordered stretches follow at residues 27–46 (EDQDDMLPSTSAAAGETNYA) and 53–97 (SSLR…QANG). The segment covering 53-74 (SSLRSQKSANKPTTAQNRNSAA) has biased composition (polar residues). A run of 7 helical transmembrane segments spans residues 492-509 (RWLNGSFFAGVYGLIHFR), 532-552 (VISLVFSWFSVGNFYIAFYFI), 572-592 (IFDFCKYAYAFLLFVIFICSM), 601-621 (FLFMACLVGFAIIMCYMLFCS), 686-706 (FLPYLLLLPGYINILNIYAFC), 787-807 (THLVLAWIACNALLVVFITTS), and 830-850 (CGLGIFRFLGSIMFLLLGIFT).

It belongs to the chitin synthase family. Class II subfamily.

The protein resides in the cell membrane. It carries out the reaction [(1-&gt;4)-N-acetyl-beta-D-glucosaminyl](n) + UDP-N-acetyl-alpha-D-glucosamine = [(1-&gt;4)-N-acetyl-beta-D-glucosaminyl](n+1) + UDP + H(+). Polymerizes chitin, a structural polymer of the cell wall and septum, by transferring the sugar moiety of UDP-GlcNAc to the non-reducing end of the growing chitin polymer. This Mucor circinelloides f. lusitanicus (Mucor racemosus var. lusitanicus) protein is Chitin synthase 1 (CHS1).